The primary structure comprises 93 residues: uncharacterized protein (93 aa).

The next 3 membrane-spanning stretches (helical) occupy residues 9–29, 40–60, and 66–86; these read ITVIGYIAGTLTTFASLPQLI, ISLAFVITFTTGLTLWLIYGI, and PIIVFNILSLMFWIPITYLKI.

It localises to the cell membrane. This is an uncharacterized protein from Methanocaldococcus jannaschii (strain ATCC 43067 / DSM 2661 / JAL-1 / JCM 10045 / NBRC 100440) (Methanococcus jannaschii).